Reading from the N-terminus, the 514-residue chain is MQNNIDKVLILDFGSQFTQLITRRIRELNVYSEIHPFHVSIDFIKEFKPKAIILSGGPSSVYEEDAPKVDKQLFELGMPILGICYGMQIIVYSMGGKVESADKREYGKAEIEITNHESIFKSFGKSNIVWMSHGDSIKSIPEGFELIAKTPNTELAAIENKQKNIYAIQFHPEVVHTENGIKIIENFLFNICKCERNWNMGSFIEYEIKRIRETVGDKNVILGLSGGVDSSVAAVLIEKAIGKQLKCIFVNNGLLRKDEDKKVVEVFRDNFNIDLIYVDASKRFLDKLAGVTDPEQKRKVIGHEFVSVFNDEAKKIENVGFLAQGTLYPDVIESVSLRGSSAVIKSHHNVGGLPKDMKFELLEPFRELFKDEVREIGLELKLPEDIVYRQPFPGPGLAVRILGDITEERVKILQEADDIVVSEIKKAGLYRKLWQSFAILLPVKSVGVMGDGRTYEQVCAVRAVESVDAMTADWAKIDYNVLGIISNRIINEVKGINRVVYDISSKPPATIEWE.

The region spanning 7–197 (KVLILDFGSQ…LFNICKCERN (191 aa)) is the Glutamine amidotransferase type-1 domain. Residue cysteine 84 is the Nucleophile of the active site. Active-site residues include histidine 171 and glutamate 173. The 192-residue stretch at 198–389 (WNMGSFIEYE…LKLPEDIVYR (192 aa)) folds into the GMPS ATP-PPase domain. ATP is bound at residue 225–231 (SGGVDSS).

As to quaternary structure, homodimer.

It catalyses the reaction XMP + L-glutamine + ATP + H2O = GMP + L-glutamate + AMP + diphosphate + 2 H(+). It participates in purine metabolism; GMP biosynthesis; GMP from XMP (L-Gln route): step 1/1. Functionally, catalyzes the synthesis of GMP from XMP. In Brachyspira hyodysenteriae (strain ATCC 49526 / WA1), this protein is GMP synthase [glutamine-hydrolyzing].